The chain runs to 205 residues: MCIFVDVEGIDGVGKSTVIRLTADELRRRGYLVYTTSEPSDSPIGLFIRRSILESNLEVEPMALALLFAADRVIHYNRVIKPKVKEGYIVITERYIESSVAYQGSQGVPVEWIIEVNSMVAEPDLVIVLNAPLNTVASRLSNRGMLEYFERNTDFLRSVQEVYLRRARERNYPVIDASRVINNVVNDVLTLIEDKAKGKCKNYNQ.

9–16 (GIDGVGKS) contacts ATP.

The protein belongs to the thymidylate kinase family.

It catalyses the reaction dTMP + ATP = dTDP + ADP. This is Probable thymidylate kinase from Caldivirga maquilingensis (strain ATCC 700844 / DSM 13496 / JCM 10307 / IC-167).